A 234-amino-acid polypeptide reads, in one-letter code: Small ribosomal subunit protein eS4 (234 aa).

The S4 RNA-binding; degenerate domain occupies 38-99; it reads IPLLIALRDY…GNDYLVSYDR (62 aa).

Belongs to the eukaryotic ribosomal protein eS4 family.

This chain is Small ribosomal subunit protein eS4 (rps4e), found in Picrophilus torridus (strain ATCC 700027 / DSM 9790 / JCM 10055 / NBRC 100828 / KAW 2/3).